Consider the following 230-residue polypeptide: Cytidylate kinase (230 aa).

11–19 (GQSAAGKST) is an ATP binding site.

The protein belongs to the cytidylate kinase family. Type 1 subfamily.

Its subcellular location is the cytoplasm. The catalysed reaction is CMP + ATP = CDP + ADP. It catalyses the reaction dCMP + ATP = dCDP + ADP. This Chloroflexus aggregans (strain MD-66 / DSM 9485) protein is Cytidylate kinase.